We begin with the raw amino-acid sequence, 394 residues long: Elongation factor Tu (394 aa).

The tr-type G domain occupies 10–204 (KPHVNVGTIG…ALDSYIPEPE (195 aa)). A G1 region spans residues 19 to 26 (GHVDHGKT). 19–26 (GHVDHGKT) contacts GTP. Thr26 serves as a coordination point for Mg(2+). The interval 60 to 64 (GITIN) is G2. A G3 region spans residues 81–84 (DCPG). GTP-binding positions include 81-85 (DCPGH) and 136-139 (NKCD). The interval 136 to 139 (NKCD) is G4. Residues 174 to 176 (SAL) are G5.

Belongs to the TRAFAC class translation factor GTPase superfamily. Classic translation factor GTPase family. EF-Tu/EF-1A subfamily. Monomer.

The protein localises to the cytoplasm. It catalyses the reaction GTP + H2O = GDP + phosphate + H(+). Functionally, GTP hydrolase that promotes the GTP-dependent binding of aminoacyl-tRNA to the A-site of ribosomes during protein biosynthesis. This Sodalis glossinidius (strain morsitans) protein is Elongation factor Tu.